The following is a 173-amino-acid chain: NEDD4-binding protein 2-like 1 (173 aa).

The interval 1–35 (MEESFLESFGRLSLRQQQPPPPRPPAPPPLRGTPP) is disordered. Residues 18-32 (QPPPPRPPAPPPLRG) are compositionally biased toward pro residues.

Interacts with dynactin subunit proteins, including DCTN4, DCTN5 and DCTN5.

Might play a role in adipocyte differentiation and triglyceride accumulation. This Bos taurus (Bovine) protein is NEDD4-binding protein 2-like 1 (N4BP2L1).